We begin with the raw amino-acid sequence, 415 residues long: 3-isopropylmalate dehydratase large subunit (415 aa).

Residues Cys-297, Cys-355, and Cys-358 each coordinate [4Fe-4S] cluster.

It belongs to the aconitase/IPM isomerase family. LeuC type 2 subfamily. As to quaternary structure, heterodimer of LeuC and LeuD. [4Fe-4S] cluster serves as cofactor.

The catalysed reaction is (2R,3S)-3-isopropylmalate = (2S)-2-isopropylmalate. The protein operates within amino-acid biosynthesis; L-leucine biosynthesis; L-leucine from 3-methyl-2-oxobutanoate: step 2/4. In terms of biological role, catalyzes the isomerization between 2-isopropylmalate and 3-isopropylmalate, via the formation of 2-isopropylmaleate. This is 3-isopropylmalate dehydratase large subunit from Caldivirga maquilingensis (strain ATCC 700844 / DSM 13496 / JCM 10307 / IC-167).